An 876-amino-acid chain; its full sequence is DNA mismatch repair protein MutS (876 aa).

Residue 628–635 (GPNMAGKS) coordinates ATP.

This sequence belongs to the DNA mismatch repair MutS family.

Its function is as follows. This protein is involved in the repair of mismatches in DNA. It is possible that it carries out the mismatch recognition step. This protein has a weak ATPase activity. The polypeptide is DNA mismatch repair protein MutS (Chlorobaculum parvum (strain DSM 263 / NCIMB 8327) (Chlorobium vibrioforme subsp. thiosulfatophilum)).